The primary structure comprises 483 residues: Glutamyl-tRNA(Gln) amidotransferase subunit A (483 aa).

Residues Lys76 and Ser151 each act as charge relay system in the active site. Residue Ser175 is the Acyl-ester intermediate of the active site.

This sequence belongs to the amidase family. GatA subfamily. As to quaternary structure, heterotrimer of A, B and C subunits.

It carries out the reaction L-glutamyl-tRNA(Gln) + L-glutamine + ATP + H2O = L-glutaminyl-tRNA(Gln) + L-glutamate + ADP + phosphate + H(+). Its function is as follows. Allows the formation of correctly charged Gln-tRNA(Gln) through the transamidation of misacylated Glu-tRNA(Gln) in organisms which lack glutaminyl-tRNA synthetase. The reaction takes place in the presence of glutamine and ATP through an activated gamma-phospho-Glu-tRNA(Gln). In Nitrosospira multiformis (strain ATCC 25196 / NCIMB 11849 / C 71), this protein is Glutamyl-tRNA(Gln) amidotransferase subunit A.